A 683-amino-acid chain; its full sequence is Multidrug resistance protein MdtO (683 aa).

The next 9 helical transmembrane spans lie at 43 to 63 (VILISMTFEIPFVALSLAVLF), 75 to 95 (FVAILFVVATVLEIGSLFLIY), 100 to 120 (GEPLIRLIIAGPILMGCMFLM), 125 to 145 (LGLVFFAVAIVAIYGQTFPAM), 158 to 178 (WCIVVGLYPTLLMTLIGVLWF), 402 to 422 (FGGAFCGAILALLFTLLVMPW), 426 to 446 (IVELLFVLAPIFLLGAWIATS), 457 to 477 (MVVTFALATLENVFGPVYDLV), and 483 to 503 (ALGIIIGTVVSAVIYTFVWPE).

The protein belongs to the MdtO family. In terms of assembly, could be part of a tripartite efflux system composed of MdtN, MdtO and MdtP.

It localises to the cell inner membrane. Functionally, could be involved in resistance to puromycin, acriflavine and tetraphenylarsonium chloride. This is Multidrug resistance protein MdtO (mdtO) from Escherichia coli (strain K12).